The sequence spans 308 residues: MNQPLQHTTVLLDEAVHALLGDGDAPAGTFVDGTFGRGGHSRLILQRLGPQGRLVAFDKDTEAIQAAARITDARFSIRHQGFSHLGELPAASVSGVLLDLGVSSPQIDDPQRGFSFRFDGPLDMRMDTTRGQSVAEWLADAETAQIAEVIRDYGEERFAGPIAKAIVARRTERGPIASTAELADIVAGAVKTREPGQNPATRTFQALRIFINAELEELQQALEGSLHVLRPGGRLVVISFHSLEDRIVKQFIAQHSKEVYDRRAPFAPPQPMRLRALERIKPSTDEVAANARARSAVMRVAERTEVPA.

Residues 38–40, D58, F82, D99, and Q106 contribute to the S-adenosyl-L-methionine site; that span reads GGH.

Belongs to the methyltransferase superfamily. RsmH family.

The protein localises to the cytoplasm. The enzyme catalyses cytidine(1402) in 16S rRNA + S-adenosyl-L-methionine = N(4)-methylcytidine(1402) in 16S rRNA + S-adenosyl-L-homocysteine + H(+). Its function is as follows. Specifically methylates the N4 position of cytidine in position 1402 (C1402) of 16S rRNA. This is Ribosomal RNA small subunit methyltransferase H from Acidovorax sp. (strain JS42).